The following is a 463-amino-acid chain: EPD1-interacting receptor-like cytoplasmic serine/threonine-protein kinase (463 aa).

Positions 91 to 383 (FSSANFLGKG…LTDIPIGPFV (293 aa)) constitute a Protein kinase domain. Residues 97 to 105 (LGKGGFGPV) and K126 contribute to the ATP site. Phosphotyrosine is present on residues Y171 and Y173. Residue D221 is the Proton acceptor of the active site.

This sequence belongs to the protein kinase superfamily. Ser/Thr protein kinase family. In terms of assembly, interacts with the V.dahliae elicitor EPD1 (AC G2WWH6). Phosphorylated at Tyr-171 and Tyr-173 in the presence of pathogen-associated molecular patterns (PAMPs); this triggers the expression of pathogenesis-related genes.

Its subcellular location is the cell membrane. It carries out the reaction L-seryl-[protein] + ATP = O-phospho-L-seryl-[protein] + ADP + H(+). The catalysed reaction is L-threonyl-[protein] + ATP = O-phospho-L-threonyl-[protein] + ADP + H(+). Required for pathogen-associated molecular pattern (PAMP, e.g. chitin and flg22)-triggered immunity (PTI) involving reactive oxygen species (ROS) accumulation and triggering plant defense, including defense-related gene expression (e.g. PR1 and LOX). Ensures specific recognition of the EPD1 effector of Verticillium dahliae, resulting in a hypersensitive response known as effector-triggered immunity (ETI), characterized by the activation of programmed cell death to limit infection by the pathogen. Priming plants with the incompatible pathogen V.dahliae leads to an increased resistance to both the broad-host-range filamentous pathogen Botrytis cinerea and the semibiotrophic pathogen Phytophthora capsici, as a result of systemic acquired resistance (SAR). In Nicotiana benthamiana, this protein is EPD1-interacting receptor-like cytoplasmic serine/threonine-protein kinase.